The following is a 93-amino-acid chain: Aspartyl/glutamyl-tRNA(Asn/Gln) amidotransferase subunit C (93 aa).

The protein belongs to the GatC family. In terms of assembly, heterotrimer of A, B and C subunits.

The catalysed reaction is L-glutamyl-tRNA(Gln) + L-glutamine + ATP + H2O = L-glutaminyl-tRNA(Gln) + L-glutamate + ADP + phosphate + H(+). It carries out the reaction L-aspartyl-tRNA(Asn) + L-glutamine + ATP + H2O = L-asparaginyl-tRNA(Asn) + L-glutamate + ADP + phosphate + 2 H(+). Functionally, allows the formation of correctly charged Asn-tRNA(Asn) or Gln-tRNA(Gln) through the transamidation of misacylated Asp-tRNA(Asn) or Glu-tRNA(Gln) in organisms which lack either or both of asparaginyl-tRNA or glutaminyl-tRNA synthetases. The reaction takes place in the presence of glutamine and ATP through an activated phospho-Asp-tRNA(Asn) or phospho-Glu-tRNA(Gln). This chain is Aspartyl/glutamyl-tRNA(Asn/Gln) amidotransferase subunit C, found in Methanococcoides burtonii (strain DSM 6242 / NBRC 107633 / OCM 468 / ACE-M).